The primary structure comprises 340 residues: MSAPIIAIDAMGGDFGPRNIVQASLACLTATPSLHLALVGQASLIEELIASHAAVDRSRLRVVNATESIAMDERPSQALRGKSDSSMRVALELVSSGQAQACVSAGNTGALMALSRYVLKTLPGIDRPAMIAAIPTRTGHCQLLDLGANVDCSAEALYQFAVMGSVLAETLGVTKPRVALLNVGTEDIKGNQQVKLAAGLLQAAAGLNYIGYVEGDGVYRGEADVVVCDGFVGNVLLKSSEGLATMIAARIDALFNRNLLSRAVGALALPLLRRLQIDLAPARHNGASLLGLQGVVVKSHGSASVSGFQSAIQRAIVESREDLPQRLKGRLEVMFADGRT.

The protein belongs to the PlsX family. As to quaternary structure, homodimer. Probably interacts with PlsY.

The protein localises to the cytoplasm. It carries out the reaction a fatty acyl-[ACP] + phosphate = an acyl phosphate + holo-[ACP]. Its pathway is lipid metabolism; phospholipid metabolism. Functionally, catalyzes the reversible formation of acyl-phosphate (acyl-PO(4)) from acyl-[acyl-carrier-protein] (acyl-ACP). This enzyme utilizes acyl-ACP as fatty acyl donor, but not acyl-CoA. The sequence is that of Phosphate acyltransferase from Pseudomonas syringae pv. tomato (strain ATCC BAA-871 / DC3000).